Here is a 349-residue protein sequence, read N- to C-terminus: Protein-glutamate methylesterase/protein-glutamine glutaminase (349 aa).

The Response regulatory domain occupies 5–122 (RVLSVDDSAL…REGMLAYSEM (118 aa)). At aspartate 56 the chain carries 4-aspartylphosphate. Residues 152–344 (LLSSEKLIAI…QQMLAKISAG (193 aa)) enclose the CheB-type methylesterase domain. Catalysis depends on residues serine 164, histidine 190, and aspartate 286.

The protein belongs to the CheB family. In terms of processing, phosphorylated by CheA. Phosphorylation of the N-terminal regulatory domain activates the methylesterase activity.

It is found in the cytoplasm. It carries out the reaction [protein]-L-glutamate 5-O-methyl ester + H2O = L-glutamyl-[protein] + methanol + H(+). It catalyses the reaction L-glutaminyl-[protein] + H2O = L-glutamyl-[protein] + NH4(+). In terms of biological role, involved in chemotaxis. Part of a chemotaxis signal transduction system that modulates chemotaxis in response to various stimuli. Catalyzes the demethylation of specific methylglutamate residues introduced into the chemoreceptors (methyl-accepting chemotaxis proteins or MCP) by CheR. Also mediates the irreversible deamidation of specific glutamine residues to glutamic acid. The sequence is that of Protein-glutamate methylesterase/protein-glutamine glutaminase from Salmonella paratyphi A (strain ATCC 9150 / SARB42).